The sequence spans 360 residues: Sensor histidine kinase LiaS (360 aa).

Residues 1–15 lie on the Cytoplasmic side of the membrane; it reads MRKKMLASLQWRAIR. The helical transmembrane segment at 16–36 threads the bilayer; that stretch reads MTTGISLLLFVCLISFMMFYY. Topologically, residues 37–47 are extracellular; the sequence is RLDPLVLLSSS. A helical membrane pass occupies residues 48–68; the sequence is WFGIPFILILLLISVTVGFAS. At 69 to 360 the chain is on the cytoplasmic side; sequence GYMYGNRLKT…ENERDSSIID (292 aa). Residues 74–126 enclose the HAMP domain; that stretch reads NRLKTRIDTLIESILTFENGNFAYRIPPLGDDEIGLAADQLNEMAKRVELQVA. The Histidine kinase domain occupies 153 to 346; it reads RLARDLHDAV…QIEVKVPIFP (194 aa). Phosphohistidine; by autocatalysis is present on H159.

Its subcellular location is the cell membrane. The enzyme catalyses ATP + protein L-histidine = ADP + protein N-phospho-L-histidine.. In terms of biological role, member of the two-component regulatory system LiaS/LiaR probably involved in response to a subset of cell wall-active antibiotics that interfere with the lipid II cycle in the cytoplasmic membrane (bacitracin, nisin, ramoplanin and vancomycin). Also seems to be involved in response to cationic antimicrobial peptides and secretion stress. Activates probably LiaR by phosphorylation. The sequence is that of Sensor histidine kinase LiaS (liaS) from Bacillus subtilis (strain 168).